The chain runs to 223 residues: Protein-L-isoaspartate O-methyltransferase (223 aa).

S70 is a catalytic residue.

The protein belongs to the methyltransferase superfamily. L-isoaspartyl/D-aspartyl protein methyltransferase family.

The protein resides in the cytoplasm. The enzyme catalyses [protein]-L-isoaspartate + S-adenosyl-L-methionine = [protein]-L-isoaspartate alpha-methyl ester + S-adenosyl-L-homocysteine. In terms of biological role, catalyzes the methyl esterification of L-isoaspartyl residues in peptides and proteins that result from spontaneous decomposition of normal L-aspartyl and L-asparaginyl residues. It plays a role in the repair and/or degradation of damaged proteins. This is Protein-L-isoaspartate O-methyltransferase from Saccharophagus degradans (strain 2-40 / ATCC 43961 / DSM 17024).